We begin with the raw amino-acid sequence, 347 residues long: Putative coenzyme F420-dependent oxidoreductase Rv3520c (347 aa).

The chain is Putative coenzyme F420-dependent oxidoreductase Rv3520c from Mycobacterium tuberculosis (strain ATCC 25618 / H37Rv).